The primary structure comprises 72 residues: Protein kish-A (72 aa).

The first 26 residues, 1–26, serve as a signal peptide directing secretion; sequence MSAIFNFQSLLTVILLLICTCAYIRS. Residues 27 to 53 lie on the Extracellular side of the membrane; it reads LAPSLLDKNKTGLLGIFWKCARIGERK. N35 carries an N-linked (GlcNAc...) asparagine glycan. Residues 54-71 form a helical membrane-spanning segment; it reads SPYVAVCCVVMAFSILFV. Residue Q72 is a topological domain, cytoplasmic.

Belongs to the KISH family.

The protein resides in the golgi apparatus membrane. Involved in the early part of the secretory pathway. In Gallus gallus (Chicken), this protein is Protein kish-A (TMEM167A).